Consider the following 177-residue polypeptide: Disulfide bond formation protein B (177 aa).

Residues 1-14 (MLALLKQFSEKRFV) are Cytoplasmic-facing. The chain crosses the membrane as a helical span at residues 15 to 31 (WFLLAFSSLALESTALY). Residues 32–49 (FQYGMGLQPCVLCVYERL) are Periplasmic-facing. A disulfide bond links Cys41 and Cys44. The helical transmembrane segment at 50 to 65 (AMIGLFVAGTIALLQP) threads the bilayer. Over 66 to 72 (RVFILRL) the chain is Cytoplasmic. A helical membrane pass occupies residues 73-90 (IALALGLFSSIKGLLISF). Topologically, residues 91–145 (RHLDLQMNPAPWKQCEFIPNFPETLPFHQWFPFIFNPTGSCNESQWSLFGLTMVQ) are periplasmic. Cys105 and Cys131 form a disulfide bridge. A helical membrane pass occupies residues 146-164 (WLVVIFSLYVVILTLLLIA). The Cytoplasmic segment spans residues 165–177 (QVIKTRKQRRLFN).

This sequence belongs to the DsbB family.

It localises to the cell inner membrane. Functionally, required for disulfide bond formation in some periplasmic proteins. Acts by oxidizing the DsbA protein. The chain is Disulfide bond formation protein B from Haemophilus influenzae (strain ATCC 51907 / DSM 11121 / KW20 / Rd).